The following is a 129-amino-acid chain: Small ribosomal subunit protein eS6 (129 aa).

A disordered region spans residues 53–88 (TGGSDTSGRPMRPDVRGVTTKEIMSDGGVGFEPTTD).

It belongs to the eukaryotic ribosomal protein eS6 family.

The protein is Small ribosomal subunit protein eS6 (rps6e) of Haloarcula marismortui (strain ATCC 43049 / DSM 3752 / JCM 8966 / VKM B-1809) (Halobacterium marismortui).